The primary structure comprises 473 residues: Myocyte-specific enhancer factor 2C (473 aa).

One can recognise an MADS-box domain in the interval 1-61; the sequence is MGRKKIQITR…NKLFQYASTD (61 aa). K4 is subject to N6-acetyllysine. A DNA-binding region (mef2-type) is located at residues 58–86; that stretch reads ASTDMDKVLLKYTEYNEPHESRTNSDIVE. At S59 the chain carries Phosphoserine; by CK2. The disordered stretch occupies residues 91 to 116; it reads KGLNGCDSPDPDADDSVGHSPESEDK. Phosphoserine occurs at positions 98, 106, and 110. N6-acetyllysine occurs at positions 116 and 119. Residues 180 to 206 are disordered; sequence NSMSPGVTHRPPSAGNTGGLMGGDLTS. Phosphoserine is present on residues S222 and S228. Residues K234 and K239 each carry the N6-acetyllysine modification. S240 bears the Phosphoserine mark. Residues K252 and K264 each carry the N6-acetyllysine modification. The segment at 271–278 is beta domain; the sequence is SEDVDLLL. 2 positions are modified to phosphothreonine; by MAPK14: T293 and T300. The tract at residues 368 to 399 is transcription repressor; sequence ACTSTHLSQSSNLSLPSTQSLNIKSEPVSPPR. Positions 375-390 are enriched in polar residues; that stretch reads SQSSNLSLPSTQSLNI. Residues 375–473 are disordered; that stretch reads SQSSNLSLPS…RMRLSEGWAT (99 aa). A Glycyl lysine isopeptide (Lys-Gly) (interchain with G-Cter in SUMO) cross-link involves residue K391. The residue at position 396 (S396) is a Phosphoserine; by CDK5. S419 is modified (phosphoserine; by MAPK7). Over residues 419 to 432 the composition is skewed to low complexity; that stretch reads SPVDSLSSCSSSYD. A compositionally biased stretch (basic and acidic residues) spans 433–443; the sequence is GSDREDHRNEF. S445 bears the Phosphoserine mark.

It belongs to the MEF2 family. As to quaternary structure, forms a complex with class II HDACs in undifferentiating cells. On myogenic differentiation, HDACs are released into the cytoplasm allowing MEF2s to interact with other proteins for activation. Interacts with EP300 in differentiating cells; the interaction acetylates MEF2C leading to increased DNA binding and activation. Interacts with HDAC7 and CARM1. Interacts with HDAC4 and HDAC9; the interaction with HDACs represses transcriptional activity. Interacts with LPIN1. Interacts with MYOCD. Interacts with AKAP13. Interacts with FOXK1; the interaction inhibits MEF2C transactivation activity. Interacts (via N-terminus) with HABP4; this interaction decreases DNA-binding activity of MEF2C in myocardial cells in response to mechanical stress. Interacts with JPH2; interaction specifically takes place with the Junctophilin-2 N-terminal fragment cleavage product of JPH2. Interacts (via MADS box) with SOX18. Interacts with PHF7; the interaction promotes MEF2C binding to its transcription targets. Post-translationally, phosphorylated on Ser-59; which enhances DNA binding activity. Phosphorylated on Ser-396; which is required for Lys-391 sumoylation and inhibits transcriptional activity. In terms of processing, acetylated by p300 on several sites in diffentiating myocytes. Acetylation on Lys-4 increases DNA binding and transactivation. Sumoylated on Lys-391 with SUMO2 but not SUMO1; which represses transcriptional activity. Post-translationally, proteolytically cleaved in cerebellar granule neurons on several sites by caspase 3 and caspase 7 following neurotoxicity. Preferentially cleaves the CDK5-mediated hyperphosphorylated form which leads to neuron apoptosis and transcriptional inactivation. Expressed in the heart. Expressed in cardiac myocytes (at protein level).

It localises to the nucleus. Its subcellular location is the cytoplasm. It is found in the sarcoplasm. In terms of biological role, transcription activator which binds specifically to the MEF2 element present in the regulatory regions of many muscle-specific genes. Controls cardiac morphogenesis and myogenesis, and is also involved in vascular development. Enhances transcriptional activation mediated by SOX18. Plays an essential role in hippocampal-dependent learning and memory by suppressing the number of excitatory synapses and thus regulating basal and evoked synaptic transmission. Crucial for normal neuronal development, distribution, and electrical activity in the neocortex. Necessary for proper development of megakaryocytes and platelets and for bone marrow B-lymphopoiesis. Required for B-cell survival and proliferation in response to BCR stimulation, efficient IgG1 antibody responses to T-cell-dependent antigens and for normal induction of germinal center B-cells. May also be involved in neurogenesis and in the development of cortical architecture. The polypeptide is Myocyte-specific enhancer factor 2C (Rattus norvegicus (Rat)).